We begin with the raw amino-acid sequence, 209 residues long: ATP-dependent Clp protease proteolytic subunit 1 (209 aa).

Catalysis depends on Ser-109, which acts as the Nucleophile. His-134 is a catalytic residue.

This sequence belongs to the peptidase S14 family. Fourteen ClpP subunits assemble into 2 heptameric rings which stack back to back to give a disk-like structure with a central cavity, resembling the structure of eukaryotic proteasomes.

It is found in the cytoplasm. The catalysed reaction is Hydrolysis of proteins to small peptides in the presence of ATP and magnesium. alpha-casein is the usual test substrate. In the absence of ATP, only oligopeptides shorter than five residues are hydrolyzed (such as succinyl-Leu-Tyr-|-NHMec, and Leu-Tyr-Leu-|-Tyr-Trp, in which cleavage of the -Tyr-|-Leu- and -Tyr-|-Trp bonds also occurs).. Cleaves peptides in various proteins in a process that requires ATP hydrolysis. Has a chymotrypsin-like activity. Plays a major role in the degradation of misfolded proteins. The sequence is that of ATP-dependent Clp protease proteolytic subunit 1 from Corynebacterium diphtheriae (strain ATCC 700971 / NCTC 13129 / Biotype gravis).